Consider the following 333-residue polypeptide: Photosystem II assembly protein Ycf48 (333 aa).

The N-terminal stretch at 1–25 (MRVKMFKPLRLVLLIAVSVLLMAAR) is a signal peptide.

This sequence belongs to the Ycf48 family. Part of early PSII assembly complexes which includes D1 (psbA) and PsbI; not found in mature PSII. Binds to the lumenal side of PSII complexes. Interacts with YidC.

It localises to the cellular thylakoid lumen. Its function is as follows. A factor required for optimal assembly of photosystem II (PSII), acting in the early stages of PSII assembly. Also plays a role in replacement of photodamaged D1 (psbA). Assists YidC in synthesis of chlorophyll-binding proteins. The sequence is that of Photosystem II assembly protein Ycf48 from Synechococcus sp. (strain JA-2-3B'a(2-13)) (Cyanobacteria bacterium Yellowstone B-Prime).